The primary structure comprises 130 residues: Ribosome-binding factor A (130 aa).

Belongs to the RbfA family. Monomer. Binds 30S ribosomal subunits, but not 50S ribosomal subunits or 70S ribosomes.

It is found in the cytoplasm. Functionally, one of several proteins that assist in the late maturation steps of the functional core of the 30S ribosomal subunit. Associates with free 30S ribosomal subunits (but not with 30S subunits that are part of 70S ribosomes or polysomes). Required for efficient processing of 16S rRNA. May interact with the 5'-terminal helix region of 16S rRNA. This Lachnospira eligens (strain ATCC 27750 / DSM 3376 / VPI C15-48 / C15-B4) (Eubacterium eligens) protein is Ribosome-binding factor A.